The chain runs to 282 residues: Centromere protein P (282 aa).

The stretch at 1–80 (MEQKYEEDIQ…KDLRRQTEIN (80 aa)) forms a coiled coil.

The protein belongs to the CENP-P/CTF19 family.

It localises to the nucleus. Its subcellular location is the chromosome. The protein localises to the centromere. In terms of biological role, probable component of a centromeric complex involved in assembly of kinetochore proteins, mitotic progression and chromosome segregation. The chain is Centromere protein P (cenpp) from Danio rerio (Zebrafish).